Reading from the N-terminus, the 598-residue chain is Ceramide transfer protein (598 aa).

Polar residues predominate over residues 1–11 (MSDNQSWNSSG). The segment at 1–24 (MSDNQSWNSSGSEEDPETESGPPV) is disordered. Positions 23 to 117 (PVERCGVLSK…WIDAIEQHKT (95 aa)) constitute a PH domain. Serine 126 bears the Phosphoserine mark. The residue at position 132 (serine 132) is a Phosphoserine; by PKD. Serine 135 is subject to Phosphoserine. The disordered stretch occupies residues 202 to 221 (DDEDDFPTTRSDGDFLHNTN). Positions 268-301 (KREESWQKRHDKEMEKRRRLEEAYKNAMAELKKK) form a coiled coil. Serine 315 bears the Phosphoserine mark. Positions 321-327 (EFFDAVE) match the FFAT motif. The START domain maps to 363 to 592 (GTHRFVQKVE…FTSYVQEKTA (230 aa)). Residues glutamate 446, glutamine 467, asparagine 504, and tyrosine 553 each contribute to the an N-acylsphing-4-enine site.

Interacts with VAPA and VAPB. Interaction with VAPB is less efficient than with VAPA. Interacts (via FFAT motif) with the MOSPD2 (via MSP domain). Phosphorylation on Ser-132 decreases the affinity toward phosphatidylinositol 4-phosphate at Golgi membranes and reduces ceramide transfer activity. Inactivated by hyperphosphorylation of serine residues by CSNK1G2/CK1 that triggers dissociation from the Golgi complex, thus down-regulating ER-to-Golgi transport of ceramide and sphingomyelin synthesis.

It is found in the cytoplasm. Its subcellular location is the golgi apparatus. The protein localises to the endoplasmic reticulum. It carries out the reaction N-hexadecanoylsphing-4-enine(in) = N-hexadecanoylsphing-4-enine(out). Shelters ceramides and diacylglycerol lipids inside its START domain and mediates the intracellular trafficking of ceramides and diacylglycerol lipids in a non-vesicular manner. The sequence is that of Ceramide transfer protein (CERT1) from Cricetulus griseus (Chinese hamster).